Here is a 508-residue protein sequence, read N- to C-terminus: Maturase K (508 aa).

This sequence belongs to the intron maturase 2 family. MatK subfamily.

Its subcellular location is the plastid. It is found in the chloroplast. Usually encoded in the trnK tRNA gene intron. Probably assists in splicing its own and other chloroplast group II introns. This Stewartia pseudocamellia (Japanese stewartia) protein is Maturase K.